Consider the following 450-residue polypeptide: Akuammiline synthase 2 (450 aa).

Residue H154 is the Proton acceptor of the active site. Residues 218 to 225 (MRRFVFDA) carry the Nuclear localization signal motif. The active-site Proton acceptor is the D376.

Belongs to the plant acyltransferase family. Monomer.

It localises to the cytoplasm. The protein localises to the nucleus. The catalysed reaction is rhazimol + acetyl-CoA = akuammiline + CoA + H(+). It participates in alkaloid biosynthesis. Its function is as follows. Acyltransferase involved in the biosynthesis of akuammilan monoterpene indole alkaloids (MIAs) natural products, components with various biological properties such as antidiabetic, antibacterial, anti-inflammatory, anticancer, and antimalarial activities. Catalyzes the conversion of rhazimol to akuammiline. This is Akuammiline synthase 2 from Alstonia scholaris (Dogbane).